The sequence spans 408 residues: Serine/threonine-protein kinase ATG1t (408 aa).

The Protein kinase domain maps to 7–272; the sequence is YIAKSKLSES…GRIKNSRVWV (266 aa). Residues 13-21 and K36 each bind ATP; that span reads LSESLTSTV. D129 acts as the Proton acceptor in catalysis.

The protein belongs to the protein kinase superfamily. Ser/Thr protein kinase family.

The protein resides in the cytoplasmic vesicle. The protein localises to the autophagosome. In terms of biological role, serine/threonine protein kinase involved in autophagy. The ATG1-ATG13 protein kinase complex regulates downstream events required for autophagosome enclosure and/or vacuolar delivery. This Arabidopsis thaliana (Mouse-ear cress) protein is Serine/threonine-protein kinase ATG1t.